A 418-amino-acid polypeptide reads, in one-letter code: CinA-like protein (418 aa).

Belongs to the CinA family.

The polypeptide is CinA-like protein (Cyanothece sp. (strain PCC 7425 / ATCC 29141)).